A 430-amino-acid polypeptide reads, in one-letter code: Toxin coregulated pilus biosynthesis protein B (430 aa).

Positions 351-366 are enriched in polar residues; that stretch reads NFSSESAKDSQGTTQK. The tract at residues 351–371 is disordered; the sequence is NFSSESAKDSQGTTQKDGSKG.

Its function is as follows. Involved in TCP pilus biogenesis. The protein is Toxin coregulated pilus biosynthesis protein B (tcpB) of Vibrio cholerae serotype O1 (strain ATCC 39315 / El Tor Inaba N16961).